A 188-amino-acid chain; its full sequence is Heterodisulfide reductase subunit C-like protein (188 aa).

4Fe-4S ferredoxin-type domains lie at 34 to 64 and 78 to 109; these read KELG…FEWY and DELL…FEVM. [4Fe-4S] cluster is bound by residues cysteine 44, cysteine 47, cysteine 50, cysteine 54, cysteine 89, cysteine 92, cysteine 95, and cysteine 99.

It belongs to the HdrC family. The heterodisulfide reductase is composed of three subunits; HdlA, HdlB and HdlC. It forms a complex with the F420-non-reducing hydrogenase (Mvh), which provides the reducing equivalents to the heterodisulfide reductase.

It is found in the cytoplasm. Has oxidoreductase activity. The Hdl and Mvh subunits may together mediate electron transfer from hydrogen to an unidentified electron acceptor on the cytoplasmic side of the membrane. This is Heterodisulfide reductase subunit C-like protein (hdlC) from Archaeoglobus profundus (strain DSM 5631 / JCM 9629 / NBRC 100127 / Av18).